The sequence spans 186 residues: Protein C (186 aa).

Residues 1–15 (MSKTDWNASGLSRPS) are compositionally biased toward polar residues. A disordered region spans residues 1–45 (MSKTDWNASGLSRPSPSAHWPSRKPWQHGQKYQTTQDRTEPPARK).

It belongs to the morbillivirus protein C family. Interacts with the phosphoprotein (via C-terminus); this interaction allows C to associate with the ribonucleocapsid.

The protein localises to the host nucleus. Its subcellular location is the host cytoplasmic vesicle. Ribonucleocapsid-associated protein that interacts with the phosphoprotein (P), thereby increasing replication accuracy and processivity of the polymerase complex. This Homo sapiens (Human) protein is Protein C (P/V/C).